The sequence spans 479 residues: PTS system MurNAc-GlcNAc-specific EIIBC component (479 aa).

Residues glutamine 5–glutamate 87 form the PTS EIIB type-1 domain. The active-site Phosphocysteine intermediate; for EIIB activity is cysteine 27. The 355-residue stretch at lysine 125–aspartate 479 folds into the PTS EIIC type-1 domain. Transmembrane regions (helical) follow at residues isoleucine 130 to valine 150, valine 169 to isoleucine 189, phenylalanine 195 to threonine 215, leucine 229 to isoleucine 249, isoleucine 269 to valine 289, isoleucine 303 to glycine 323, leucine 344 to valine 364, alanine 379 to leucine 399, phenylalanine 403 to isoleucine 423, and leucine 445 to phenylalanine 465.

The protein localises to the cell membrane. The enzyme catalyses N-acetyl-beta-D-muramate-(1-&gt;4)-N-acetyl-D-glucosamine(out) + N(pros)-phospho-L-histidyl-[protein] = 6-phospho-N-acetyl-beta-D-muramate-(1-&gt;4)-N-acetyl-D-glucosamine(in) + L-histidyl-[protein]. The protein operates within cell wall biogenesis; peptidoglycan recycling. The phosphoenolpyruvate-dependent sugar phosphotransferase system (sugar PTS), a major carbohydrate active transport system, catalyzes the phosphorylation of incoming sugar substrates concomitantly with their translocation across the cell membrane. This system is involved in the uptake and phosphorylation of MurNAc-GlcNAc, the principle peptidoglycan turnover product of S.aureus, yielding cytoplasmic MurNAc 6P-GlcNAc. This chain is PTS system MurNAc-GlcNAc-specific EIIBC component, found in Staphylococcus saprophyticus subsp. saprophyticus (strain ATCC 15305 / DSM 20229 / NCIMB 8711 / NCTC 7292 / S-41).